The chain runs to 430 residues: Aspartate aminotransferase, mitochondrial (430 aa).

Residues 1 to 29 constitute a mitochondrion transit peptide; sequence MALLHSGRALPGIAAAFHPGLAAAASARA. T48 is subject to Phosphothreonine. Position 59 is an N6-acetyllysine (K59). G65 is a binding site for substrate. K73 carries the N6-acetyllysine; alternate modification. K73 carries the N6-succinyllysine; alternate modification. K82 carries the N6-acetyllysine modification. K90 is modified (N6-acetyllysine; alternate). K90 carries the post-translational modification N6-succinyllysine; alternate. Y96 bears the 3'-nitrotyrosine; alternate mark. A Phosphotyrosine; alternate modification is found at Y96. 2 positions are modified to N6-acetyllysine; alternate: K107 and K122. K107 and K122 each carry N6-succinyllysine; alternate. At S143 the chain carries Phosphoserine. K159 is subject to N6-acetyllysine; alternate. Position 159 is an N6-succinyllysine; alternate (K159). A substrate-binding site is contributed by W162. The residue at position 185 (K185) is an N6-acetyllysine; alternate. K185 carries the N6-succinyllysine; alternate modification. N215 lines the substrate pocket. K227 is modified (N6-succinyllysine). K234 is subject to N6-acetyllysine. N6-acetyllysine; alternate occurs at positions 279 and 296. The residue at position 279 (K279) is an N6-(pyridoxal phosphate)lysine; alternate. An N6-succinyllysine; alternate modification is found at K296. Position 302 is an N6-acetyllysine (K302). K309 carries the N6-acetyllysine; alternate modification. Position 309 is an N6-succinyllysine; alternate (K309). Asymmetric dimethylarginine is present on R313. The residue at position 333 (T333) is a Phosphothreonine. K338 is subject to N6-acetyllysine; alternate. K338 bears the N6-succinyllysine; alternate mark. K345 bears the N6-acetyllysine mark. K363 carries the N6-acetyllysine; alternate modification. Residue K363 is modified to N6-succinyllysine; alternate. An N6-acetyllysine mark is found at K364 and K387. An N6-acetyllysine; alternate mark is found at K396 and K404. N6-succinyllysine; alternate is present on residues K396 and K404. Residue R407 participates in substrate binding.

It belongs to the class-I pyridoxal-phosphate-dependent aminotransferase family. As to quaternary structure, homodimer. Requires pyridoxal 5'-phosphate as cofactor.

It is found in the mitochondrion matrix. The protein localises to the cell membrane. The catalysed reaction is L-aspartate + 2-oxoglutarate = oxaloacetate + L-glutamate. It carries out the reaction L-kynurenine + 2-oxoglutarate = kynurenate + L-glutamate + H2O. Functionally, catalyzes the irreversible transamination of the L-tryptophan metabolite L-kynurenine to form kynurenic acid (KA). As a member of the malate-aspartate shuttle, it has a key role in the intracellular NAD(H) redox balance. Is important for metabolite exchange between mitochondria and cytosol, and for amino acid metabolism. Facilitates cellular uptake of long-chain free fatty acids. This is Aspartate aminotransferase, mitochondrial (GOT2) from Pongo abelii (Sumatran orangutan).